A 161-amino-acid chain; its full sequence is uncharacterized protein (161 aa).

This is an uncharacterized protein from Mycobacterium tuberculosis (strain CDC 1551 / Oshkosh).